Here is a 196-residue protein sequence, read N- to C-terminus: Carnitine operon protein CaiE (196 aa).

Positions 173 to 196 are disordered; it reads TQPLRQMEENRPRLQGTTDVTPKR. Positions 187–196 are enriched in polar residues; sequence QGTTDVTPKR.

This sequence belongs to the transferase hexapeptide repeat family.

It functions in the pathway amine and polyamine metabolism; carnitine metabolism. Functionally, overproduction of CaiE stimulates the activity of CaiB and CaiD. The protein is Carnitine operon protein CaiE of Escherichia coli O157:H7.